The sequence spans 251 residues: Coproheme decarboxylase (251 aa).

Residues arginine 133, 147-151 (YPMSK), histidine 174, glutamine 187, and serine 225 each bind Fe-coproporphyrin III. The active site involves tyrosine 147.

This sequence belongs to the ChdC family. Type 1 subfamily. Fe-coproporphyrin III is required as a cofactor.

The catalysed reaction is Fe-coproporphyrin III + 2 H2O2 + 2 H(+) = heme b + 2 CO2 + 4 H2O. It carries out the reaction Fe-coproporphyrin III + H2O2 + H(+) = harderoheme III + CO2 + 2 H2O. It catalyses the reaction harderoheme III + H2O2 + H(+) = heme b + CO2 + 2 H2O. It functions in the pathway porphyrin-containing compound metabolism; protoheme biosynthesis. Its function is as follows. Involved in coproporphyrin-dependent heme b biosynthesis. Catalyzes the decarboxylation of Fe-coproporphyrin III (coproheme) to heme b (protoheme IX), the last step of the pathway. The reaction occurs in a stepwise manner with a three-propionate intermediate. In Listeria innocua serovar 6a (strain ATCC BAA-680 / CLIP 11262), this protein is Coproheme decarboxylase.